The chain runs to 107 residues: MVIVANKTLIRKGEGHKLVKRFDKIGKIEMQKGFLGLEVLVNAKEKEVDEVTISTRWETKADFHAWTKSEAFREAHSGRNARPDYILGNEIEFYDVEVVRMPIAQAQ.

The 92-residue stretch at 2–93 (VIVANKTLIR…DYILGNEIEF (92 aa)) folds into the ABM domain. Residue N6 coordinates Fe cation. Position 76 (H76) interacts with heme.

It belongs to the antibiotic biosynthesis monooxygenase family. Heme-degrading monooxygenase IsdG subfamily. Homodimer.

Its subcellular location is the cytoplasm. It carries out the reaction heme b + 3 reduced [NADPH--hemoprotein reductase] + 3 O2 = biliverdin IXalpha + CO + Fe(2+) + 3 oxidized [NADPH--hemoprotein reductase] + 3 H2O + H(+). In terms of biological role, allows bacterial pathogens to use the host heme as an iron source. Catalyzes the oxidative degradation of the heme macrocyclic porphyrin ring to the biliverdin in the presence of a suitable electron donor such as ascorbate or NADPH--cytochrome P450 reductase, with subsequent release of free iron. In Shouchella clausii (strain KSM-K16) (Alkalihalobacillus clausii), this protein is Heme-degrading monooxygenase.